An 880-amino-acid chain; its full sequence is Alanine--tRNA ligase (880 aa).

Zn(2+) contacts are provided by His567, His571, Cys669, and His673.

This sequence belongs to the class-II aminoacyl-tRNA synthetase family. Zn(2+) serves as cofactor.

It localises to the cytoplasm. The enzyme catalyses tRNA(Ala) + L-alanine + ATP = L-alanyl-tRNA(Ala) + AMP + diphosphate. Its function is as follows. Catalyzes the attachment of alanine to tRNA(Ala) in a two-step reaction: alanine is first activated by ATP to form Ala-AMP and then transferred to the acceptor end of tRNA(Ala). Also edits incorrectly charged Ser-tRNA(Ala) and Gly-tRNA(Ala) via its editing domain. The chain is Alanine--tRNA ligase from Bacillus cereus (strain ZK / E33L).